Consider the following 180-residue polypeptide: Large ribosomal subunit protein uL5 (180 aa).

The protein belongs to the universal ribosomal protein uL5 family. As to quaternary structure, part of the 50S ribosomal subunit; part of the 5S rRNA/L5/L18/L25 subcomplex. Contacts the 5S rRNA and the P site tRNA. Forms a bridge to the 30S subunit in the 70S ribosome.

Its function is as follows. This is one of the proteins that bind and probably mediate the attachment of the 5S RNA into the large ribosomal subunit, where it forms part of the central protuberance. In the 70S ribosome it contacts protein S13 of the 30S subunit (bridge B1b), connecting the 2 subunits; this bridge is implicated in subunit movement. Contacts the P site tRNA; the 5S rRNA and some of its associated proteins might help stabilize positioning of ribosome-bound tRNAs. The polypeptide is Large ribosomal subunit protein uL5 (Chlamydia trachomatis serovar A (strain ATCC VR-571B / DSM 19440 / HAR-13)).